Here is a 122-residue protein sequence, read N- to C-terminus: Large ribosomal subunit protein uL18 (122 aa).

Positions 1–27 (MSNLSRKQQTQKRHRRLRRHLNGTAQR) are disordered. Residues 9–21 (QTQKRHRRLRRHL) are compositionally biased toward basic residues.

This sequence belongs to the universal ribosomal protein uL18 family. Part of the 50S ribosomal subunit; part of the 5S rRNA/L5/L18/L25 subcomplex. Contacts the 5S and 23S rRNAs.

Functionally, this is one of the proteins that bind and probably mediate the attachment of the 5S RNA into the large ribosomal subunit, where it forms part of the central protuberance. The polypeptide is Large ribosomal subunit protein uL18 (Prochlorococcus marinus (strain MIT 9303)).